The following is a 373-amino-acid chain: SWI/SNF-related matrix-associated actin-dependent regulator of chromatin subfamily B member 1-A (373 aa).

The segment at 1-101 is DNA-binding; it reads MALSKTYGQK…DEKYKAVSIS (101 aa).

Belongs to the SNF5 family. In terms of assembly, component of the multiprotein chromatin-remodeling complexes SWI/SNF. Component of neural progenitors-specific chromatin remodeling complex (npBAF complex) and the neuron-specific chromatin remodeling complex (nBAF complex). Component of the BAF (SWI/SNF) chromatin remodeling complex. Component of the SWI/SNF-B (PBAF) chromatin remodeling complex. Binds to double-stranded DNA.

The protein resides in the nucleus. Functionally, involved in chromatin-remodeling. Core component of the BAF (SWI/SNF) complex. This ATP-dependent chromatin-remodeling complex plays important roles in cell proliferation and differentiation, in cellular antiviral activities and inhibition of tumor formation. Belongs to the neural progenitors-specific chromatin remodeling complex (npBAF complex) and the neuron-specific chromatin remodeling complex (nBAF complex) and may play a role in neural development. In Danio rerio (Zebrafish), this protein is SWI/SNF-related matrix-associated actin-dependent regulator of chromatin subfamily B member 1-A (smarcb1a).